A 300-amino-acid polypeptide reads, in one-letter code: Acetylglutamate kinase (300 aa).

Residues 72–73, arginine 94, and asparagine 197 contribute to the substrate site; that span reads GG.

It belongs to the acetylglutamate kinase family. ArgB subfamily.

It is found in the cytoplasm. It catalyses the reaction N-acetyl-L-glutamate + ATP = N-acetyl-L-glutamyl 5-phosphate + ADP. It functions in the pathway amino-acid biosynthesis; L-arginine biosynthesis; N(2)-acetyl-L-ornithine from L-glutamate: step 2/4. Functionally, catalyzes the ATP-dependent phosphorylation of N-acetyl-L-glutamate. In Aromatoleum aromaticum (strain DSM 19018 / LMG 30748 / EbN1) (Azoarcus sp. (strain EbN1)), this protein is Acetylglutamate kinase.